A 332-amino-acid polypeptide reads, in one-letter code: Anthranilate phosphoribosyltransferase (332 aa).

5-phospho-alpha-D-ribose 1-diphosphate-binding positions include G79, 82–83 (GD), S87, 89–92 (NIST), 107–115 (KHGNRSVSS), and S119. G79 is an anthranilate binding site. S91 contributes to the Mg(2+) binding site. N110 contacts anthranilate. R165 serves as a coordination point for anthranilate. 2 residues coordinate Mg(2+): D223 and E224.

The protein belongs to the anthranilate phosphoribosyltransferase family. Homodimer. It depends on Mg(2+) as a cofactor.

The enzyme catalyses N-(5-phospho-beta-D-ribosyl)anthranilate + diphosphate = 5-phospho-alpha-D-ribose 1-diphosphate + anthranilate. It functions in the pathway amino-acid biosynthesis; L-tryptophan biosynthesis; L-tryptophan from chorismate: step 2/5. Functionally, catalyzes the transfer of the phosphoribosyl group of 5-phosphorylribose-1-pyrophosphate (PRPP) to anthranilate to yield N-(5'-phosphoribosyl)-anthranilate (PRA). The protein is Anthranilate phosphoribosyltransferase of Erwinia tasmaniensis (strain DSM 17950 / CFBP 7177 / CIP 109463 / NCPPB 4357 / Et1/99).